The primary structure comprises 104 residues: Large ribosomal subunit protein uL24 (104 aa).

The protein belongs to the universal ribosomal protein uL24 family. In terms of assembly, part of the 50S ribosomal subunit.

Functionally, one of two assembly initiator proteins, it binds directly to the 5'-end of the 23S rRNA, where it nucleates assembly of the 50S subunit. In terms of biological role, one of the proteins that surrounds the polypeptide exit tunnel on the outside of the subunit. The polypeptide is Large ribosomal subunit protein uL24 (Saccharopolyspora erythraea (strain ATCC 11635 / DSM 40517 / JCM 4748 / NBRC 13426 / NCIMB 8594 / NRRL 2338)).